Reading from the N-terminus, the 174-residue chain is Small ribosomal subunit protein uS5c (174 aa).

The region spanning 17-80 is the S5 DRBM domain; that stretch reads WEERVVQVKR…TDAKKHLVTV (64 aa).

Belongs to the universal ribosomal protein uS5 family. Part of the 30S ribosomal subunit. Contacts protein S4.

It localises to the plastid. It is found in the chloroplast. Functionally, with S4 and S12 plays an important role in translational accuracy. The protein is Small ribosomal subunit protein uS5c (rps5) of Pyropia yezoensis (Susabi-nori).